The primary structure comprises 205 residues: MSIKYIASSKLPTPWGVFEMHGFEDSETGKEHVALTLGVFDAESPILGRIHSECLTGDALFSLRCDCGFQLQTAMQNIAEAGQGFILYLRQEGRGIGLLNKIRAYELQDGGANTVEANERLGFAADMRKYDMIIPMMEQIGISKVRLMTNNPRKVKAMQSFGLEVVERVPLQVGKNRYNEGYLKTKSTELGHMMSEHHFTEEGKD.

49–53 (RIHSE) lines the GTP pocket. Positions 54, 65, and 67 each coordinate Zn(2+). GTP is bound by residues glutamine 70, 92-94 (EGR), and threonine 114. Aspartate 126 (proton acceptor) is an active-site residue. Residue arginine 128 is the Nucleophile of the active site. Threonine 149 and lysine 154 together coordinate GTP.

It belongs to the GTP cyclohydrolase II family. Zn(2+) serves as cofactor.

The catalysed reaction is GTP + 4 H2O = 2,5-diamino-6-hydroxy-4-(5-phosphoribosylamino)-pyrimidine + formate + 2 phosphate + 3 H(+). It participates in cofactor biosynthesis; riboflavin biosynthesis; 5-amino-6-(D-ribitylamino)uracil from GTP: step 1/4. Its function is as follows. Catalyzes the conversion of GTP to 2,5-diamino-6-ribosylamino-4(3H)-pyrimidinone 5'-phosphate (DARP), formate and pyrophosphate. The protein is GTP cyclohydrolase-2 of Shewanella piezotolerans (strain WP3 / JCM 13877).